Consider the following 176-residue polypeptide: Transcription termination/antitermination protein NusG (176 aa).

A KOW domain is found at 125-149 (GEVVRVVEGPFANFTATVEEYDVEH).

The protein belongs to the NusG family.

Participates in transcription elongation, termination and antitermination. The polypeptide is Transcription termination/antitermination protein NusG (Helicobacter pylori (strain ATCC 700392 / 26695) (Campylobacter pylori)).